We begin with the raw amino-acid sequence, 528 residues long: Na(+)/H(+) antiporter NhaB (528 aa).

The next 11 membrane-spanning stretches (helical) occupy residues 23-45 (FAILSFLVINPVVFYLNPFVAGW), 66-86 (PGGLLAIEAVIIGMTSPSQVL), 95-115 (VLLLLIFMVAGIYFMKQLLLF), 139-159 (AFLSAFLDALTVIAVIIAVAV), 203-223 (LLMHAGVGTALGGVCTMVGEP), 241-261 (LRMSPVTVPVFVAGVLTCFLV), 310-330 (LIIGLAFHLASVGLIGLSVII), 349-369 (EEALPFTALLAVFFAIVGVII), 390-410 (LVIFYIAIGLLSMVSDNVFVG), 448-468 (ATPNGQAAFLFLLTSAIAPLI), and 476-496 (VWMALPYTIVLSIVGILAIQF).

The protein belongs to the NhaB Na(+)/H(+) (TC 2.A.34) antiporter family.

The protein localises to the cell inner membrane. The catalysed reaction is 2 Na(+)(in) + 3 H(+)(out) = 2 Na(+)(out) + 3 H(+)(in). Functionally, na(+)/H(+) antiporter that extrudes sodium in exchange for external protons. The protein is Na(+)/H(+) antiporter NhaB of Shewanella piezotolerans (strain WP3 / JCM 13877).